A 327-amino-acid chain; its full sequence is Undecaprenyl-phosphate 4-deoxy-4-formamido-L-arabinose transferase (327 aa).

The next 2 membrane-spanning stretches (helical) occupy residues 235–255 and 270–290; these read LLSL…VLLV and VFTL…GMGL.

This sequence belongs to the glycosyltransferase 2 family.

It is found in the cell inner membrane. The catalysed reaction is UDP-4-deoxy-4-formamido-beta-L-arabinose + di-trans,octa-cis-undecaprenyl phosphate = 4-deoxy-4-formamido-alpha-L-arabinopyranosyl di-trans,octa-cis-undecaprenyl phosphate + UDP. It functions in the pathway glycolipid biosynthesis; 4-amino-4-deoxy-alpha-L-arabinose undecaprenyl phosphate biosynthesis; 4-amino-4-deoxy-alpha-L-arabinose undecaprenyl phosphate from UDP-4-deoxy-4-formamido-beta-L-arabinose and undecaprenyl phosphate: step 1/2. It participates in bacterial outer membrane biogenesis; lipopolysaccharide biosynthesis. Functionally, catalyzes the transfer of 4-deoxy-4-formamido-L-arabinose from UDP to undecaprenyl phosphate. The modified arabinose is attached to lipid A and is required for resistance to polymyxin and cationic antimicrobial peptides. The protein is Undecaprenyl-phosphate 4-deoxy-4-formamido-L-arabinose transferase of Yersinia pestis bv. Antiqua (strain Antiqua).